Here is a 302-residue protein sequence, read N- to C-terminus: Transmembrane protein 191 (302 aa).

Residues 5-147 (QEQLLQLQKD…HLELAEAKFS (143 aa)) adopt a coiled-coil conformation. Positions 39-66 (LTGRLEELRERERSLQRRRSQASRAIRG) are disordered. A compositionally biased stretch (basic and acidic residues) spans 42–53 (RLEELRERERSL). A helical membrane pass occupies residues 242–262 (LQTLLLLPLGFLVLPLIYVVL).

Belongs to the TMEM191 family.

The protein localises to the membrane. The sequence is that of Transmembrane protein 191 from Mus musculus (Mouse).